The chain runs to 289 residues: Phosphatidylserine decarboxylase proenzyme (289 aa).

Residues Asp-89, His-146, and Ser-252 each act as charge relay system; for autoendoproteolytic cleavage activity in the active site. Residue Ser-252 is the Schiff-base intermediate with substrate; via pyruvic acid; for decarboxylase activity of the active site. At Ser-252 the chain carries Pyruvic acid (Ser); by autocatalysis.

This sequence belongs to the phosphatidylserine decarboxylase family. PSD-B subfamily. Prokaryotic type I sub-subfamily. In terms of assembly, heterodimer of a large membrane-associated beta subunit and a small pyruvoyl-containing alpha subunit. Pyruvate serves as cofactor. Is synthesized initially as an inactive proenzyme. Formation of the active enzyme involves a self-maturation process in which the active site pyruvoyl group is generated from an internal serine residue via an autocatalytic post-translational modification. Two non-identical subunits are generated from the proenzyme in this reaction, and the pyruvate is formed at the N-terminus of the alpha chain, which is derived from the carboxyl end of the proenzyme. The autoendoproteolytic cleavage occurs by a canonical serine protease mechanism, in which the side chain hydroxyl group of the serine supplies its oxygen atom to form the C-terminus of the beta chain, while the remainder of the serine residue undergoes an oxidative deamination to produce ammonia and the pyruvoyl prosthetic group on the alpha chain. During this reaction, the Ser that is part of the protease active site of the proenzyme becomes the pyruvoyl prosthetic group, which constitutes an essential element of the active site of the mature decarboxylase.

It is found in the cell membrane. The enzyme catalyses a 1,2-diacyl-sn-glycero-3-phospho-L-serine + H(+) = a 1,2-diacyl-sn-glycero-3-phosphoethanolamine + CO2. Its pathway is phospholipid metabolism; phosphatidylethanolamine biosynthesis; phosphatidylethanolamine from CDP-diacylglycerol: step 2/2. Catalyzes the formation of phosphatidylethanolamine (PtdEtn) from phosphatidylserine (PtdSer). The sequence is that of Phosphatidylserine decarboxylase proenzyme from Nitrosospira multiformis (strain ATCC 25196 / NCIMB 11849 / C 71).